A 92-amino-acid polypeptide reads, in one-letter code: PqqA binding protein (92 aa).

It belongs to the PqqD family. Monomer. Interacts with PqqE.

The protein operates within cofactor biosynthesis; pyrroloquinoline quinone biosynthesis. Functionally, functions as a PqqA binding protein and presents PqqA to PqqE, in the pyrroloquinoline quinone (PQQ) biosynthetic pathway. This is PqqA binding protein from Stutzerimonas stutzeri (strain A1501) (Pseudomonas stutzeri).